A 178-amino-acid chain; its full sequence is Translation initiation factor IF-3 (178 aa).

This sequence belongs to the IF-3 family. Monomer.

The protein localises to the cytoplasm. IF-3 binds to the 30S ribosomal subunit and shifts the equilibrium between 70S ribosomes and their 50S and 30S subunits in favor of the free subunits, thus enhancing the availability of 30S subunits on which protein synthesis initiation begins. The chain is Translation initiation factor IF-3 from Picosynechococcus sp. (strain ATCC 27264 / PCC 7002 / PR-6) (Agmenellum quadruplicatum).